The chain runs to 186 residues: Large ribosomal subunit protein uL22 (186 aa).

Residues 160-186 (AAENEPAKKKLSKKKLQRQKEKMMRNE) are disordered. Basic and acidic residues predominate over residues 177 to 186 (RQKEKMMRNE).

Belongs to the universal ribosomal protein uL22 family.

The chain is Large ribosomal subunit protein uL22 (RpL17) from Aedes aegypti (Yellowfever mosquito).